The sequence spans 198 residues: Peptidyl-tRNA hydrolase (198 aa).

Tyrosine 14 provides a ligand contact to tRNA. The active-site Proton acceptor is the histidine 19. The tRNA site is built by tyrosine 64, asparagine 66, and asparagine 113.

This sequence belongs to the PTH family. As to quaternary structure, monomer.

It localises to the cytoplasm. It catalyses the reaction an N-acyl-L-alpha-aminoacyl-tRNA + H2O = an N-acyl-L-amino acid + a tRNA + H(+). Its function is as follows. Hydrolyzes ribosome-free peptidyl-tRNAs (with 1 or more amino acids incorporated), which drop off the ribosome during protein synthesis, or as a result of ribosome stalling. Functionally, catalyzes the release of premature peptidyl moieties from peptidyl-tRNA molecules trapped in stalled 50S ribosomal subunits, and thus maintains levels of free tRNAs and 50S ribosomes. This chain is Peptidyl-tRNA hydrolase, found in Acidobacterium capsulatum (strain ATCC 51196 / DSM 11244 / BCRC 80197 / JCM 7670 / NBRC 15755 / NCIMB 13165 / 161).